Reading from the N-terminus, the 415-residue chain is Histidine--tRNA ligase (415 aa).

The protein belongs to the class-II aminoacyl-tRNA synthetase family. As to quaternary structure, homodimer.

It is found in the cytoplasm. It catalyses the reaction tRNA(His) + L-histidine + ATP = L-histidyl-tRNA(His) + AMP + diphosphate + H(+). This is Histidine--tRNA ligase from Rhodospirillum rubrum (strain ATCC 11170 / ATH 1.1.1 / DSM 467 / LMG 4362 / NCIMB 8255 / S1).